Here is a 397-residue protein sequence, read N- to C-terminus: SET domain-containing protein 4 (397 aa).

Residues 29 to 245 enclose the SET domain; the sequence is AKLEPCRFKE…KCSEVFINYG (217 aa). S-adenosyl-L-methionine is bound at residue Tyr244.

Belongs to the class V-like SAM-binding methyltransferase superfamily. SETD4 family.

The protein resides in the nucleus. The catalysed reaction is L-lysyl(79)-[histone H3] + 3 S-adenosyl-L-methionine = N(6),N(6),N(6)-trimethyl-L-lysyl(79)-[histone H3] + 3 S-adenosyl-L-homocysteine + 3 H(+). The enzyme catalyses L-lysyl(20)-[histone H4] + S-adenosyl-L-methionine = N(6)-methyl-L-lysyl(20)-[histone H4] + S-adenosyl-L-homocysteine + H(+). It catalyses the reaction N(6)-methyl-L-lysyl(20)-[histone H4] + S-adenosyl-L-methionine = N(6),N(6)-dimethyl-L-lysyl(20)-[histone H4] + S-adenosyl-L-homocysteine + H(+). It carries out the reaction N(6),N(6)-dimethyl-L-lysyl(20)-[histone H4] + S-adenosyl-L-methionine = N(6),N(6),N(6)-trimethyl-L-lysyl(20)-[histone H4] + S-adenosyl-L-homocysteine + H(+). Its function is as follows. Protein-lysine N-methyltransferase involved in the regulation of cell quiescence by catalyzing the trimethylation of 'Lys-20' of histone H4 and 'Lys-79' of histone H3 (H4K20me3 and H3K79me3, respectively) during diapause formation, a state of obligate dormancy. The protein is SET domain-containing protein 4 of Artemia parthenogenetica (Brine shrimp).